A 100-amino-acid chain; its full sequence is C-X-C motif chemokine 11 (100 aa).

An N-terminal signal peptide occupies residues 1 to 21; the sequence is MNRKVTAIALAAIIWATAAQG. 2 disulfide bridges follow: C30-C57 and C32-C74.

This sequence belongs to the intercrine alpha (chemokine CxC) family. In terms of assembly, interacts with TNFAIP6 (via Link domain).

It localises to the secreted. In terms of biological role, chemotactic for interleukin-activated T-cells but not unstimulated T-cells, neutrophils or monocytes. Induces calcium release in activated T-cells. Binds to CXCR3. May play an important role in CNS diseases which involve T-cell recruitment. May play a role in skin immune responses. This Mus musculus (Mouse) protein is C-X-C motif chemokine 11 (Cxcl11).